The chain runs to 320 residues: Acetyl-coenzyme A carboxylase carboxyl transferase subunit alpha (320 aa).

Positions 42-295 (IEEKAVQALN…GDAIAAAFAE (254 aa)) constitute a CoA carboxyltransferase C-terminal domain.

The protein belongs to the AccA family. Acetyl-CoA carboxylase is a heterohexamer composed of biotin carboxyl carrier protein (AccB), biotin carboxylase (AccC) and two subunits each of ACCase subunit alpha (AccA) and ACCase subunit beta (AccD).

The protein resides in the cytoplasm. It carries out the reaction N(6)-carboxybiotinyl-L-lysyl-[protein] + acetyl-CoA = N(6)-biotinyl-L-lysyl-[protein] + malonyl-CoA. It functions in the pathway lipid metabolism; malonyl-CoA biosynthesis; malonyl-CoA from acetyl-CoA: step 1/1. In terms of biological role, component of the acetyl coenzyme A carboxylase (ACC) complex. First, biotin carboxylase catalyzes the carboxylation of biotin on its carrier protein (BCCP) and then the CO(2) group is transferred by the carboxyltransferase to acetyl-CoA to form malonyl-CoA. This chain is Acetyl-coenzyme A carboxylase carboxyl transferase subunit alpha, found in Rhodopseudomonas palustris (strain HaA2).